Reading from the N-terminus, the 449-residue chain is Trigger factor (449 aa).

Residues 162–247 (GDTVTIDYTG…IHEVKSKELP (86 aa)) form the PPIase FKBP-type domain. A compositionally biased stretch (basic residues) spans 427–438 (AKKATKKSTAKK). Positions 427–449 (AKKATKKSTAKKSTKEDEKKADK) are disordered. The span at 439 to 449 (STKEDEKKADK) shows a compositional bias: basic and acidic residues.

This sequence belongs to the FKBP-type PPIase family. Tig subfamily.

The protein resides in the cytoplasm. It carries out the reaction [protein]-peptidylproline (omega=180) = [protein]-peptidylproline (omega=0). Its function is as follows. Involved in protein export. Acts as a chaperone by maintaining the newly synthesized protein in an open conformation. Functions as a peptidyl-prolyl cis-trans isomerase. The polypeptide is Trigger factor (Lactobacillus gasseri (strain ATCC 33323 / DSM 20243 / BCRC 14619 / CIP 102991 / JCM 1131 / KCTC 3163 / NCIMB 11718 / NCTC 13722 / AM63)).